Consider the following 209-residue polypeptide: Nucleoside triphosphate pyrophosphatase (209 aa).

D79 acts as the Proton acceptor in catalysis.

This sequence belongs to the Maf family. The cofactor is a divalent metal cation.

Its subcellular location is the cytoplasm. It catalyses the reaction a ribonucleoside 5'-triphosphate + H2O = a ribonucleoside 5'-phosphate + diphosphate + H(+). It carries out the reaction a 2'-deoxyribonucleoside 5'-triphosphate + H2O = a 2'-deoxyribonucleoside 5'-phosphate + diphosphate + H(+). In terms of biological role, nucleoside triphosphate pyrophosphatase. May have a dual role in cell division arrest and in preventing the incorporation of modified nucleotides into cellular nucleic acids. This chain is Nucleoside triphosphate pyrophosphatase, found in Mycolicibacterium gilvum (strain PYR-GCK) (Mycobacterium gilvum (strain PYR-GCK)).